A 272-amino-acid polypeptide reads, in one-letter code: MMACHC-like protein (272 aa).

Residues Asp-121, Ile-132–Gln-135, and Tyr-146–Gln-148 contribute to the substrate site.

The protein belongs to the MMACHC family. The cofactor is FAD. FMN serves as cofactor.

It localises to the cytoplasm. Its function is as follows. Catalyzes the reductive dealkylation of cyanocobalamin to cob(II)alamin, using FAD or FMN as cofactor and NADPH as cosubstrate. Can also catalyze the glutathione-dependent reductive demethylation of methylcobalamin, and, with much lower efficiency, the glutathione-dependent reductive demethylation of adenosylcobalamin. Under anaerobic conditions cob(I)alamin is the first product; it is highly reactive and is converted to aquocob(II)alamin in the presence of oxygen. Binds cyanocobalamin, adenosylcobalamin, methylcobalamin and other, related vitamin B12 derivatives. The protein is MMACHC-like protein (cblc-1) of Caenorhabditis elegans.